The sequence spans 472 residues: Ribulose bisphosphate carboxylase large chain 1 (472 aa).

Residues asparagine 115 and threonine 165 each contribute to the substrate site. Lysine 167 (proton acceptor) is an active-site residue. Residue lysine 169 participates in substrate binding. Mg(2+) is bound by residues lysine 193, aspartate 195, and glutamate 196. Lysine 193 carries the N6-carboxylysine modification. The Proton acceptor role is filled by histidine 286. 3 residues coordinate substrate: arginine 287, histidine 319, and serine 371.

Belongs to the RuBisCO large chain family. Type I subfamily. Heterohexadecamer of 8 large chains and 8 small chains. It depends on Mg(2+) as a cofactor.

The catalysed reaction is 2 (2R)-3-phosphoglycerate + 2 H(+) = D-ribulose 1,5-bisphosphate + CO2 + H2O. It carries out the reaction D-ribulose 1,5-bisphosphate + O2 = 2-phosphoglycolate + (2R)-3-phosphoglycerate + 2 H(+). Functionally, ruBisCO catalyzes two reactions: the carboxylation of D-ribulose 1,5-bisphosphate, the primary event in carbon dioxide fixation, as well as the oxidative fragmentation of the pentose substrate. Both reactions occur simultaneously and in competition at the same active site. In Hydrogenovibrio marinus, this protein is Ribulose bisphosphate carboxylase large chain 1.